Here is a 571-residue protein sequence, read N- to C-terminus: Sulfite reductase [NADPH] hemoprotein beta-component (571 aa).

Residues C435, C441, C480, and C484 each coordinate [4Fe-4S] cluster. C484 is a binding site for siroheme.

Belongs to the nitrite and sulfite reductase 4Fe-4S domain family. As to quaternary structure, alpha(8)-beta(8). The alpha component is a flavoprotein, the beta component is a hemoprotein. Siroheme is required as a cofactor. The cofactor is [4Fe-4S] cluster.

It catalyses the reaction hydrogen sulfide + 3 NADP(+) + 3 H2O = sulfite + 3 NADPH + 4 H(+). It participates in sulfur metabolism; hydrogen sulfide biosynthesis; hydrogen sulfide from sulfite (NADPH route): step 1/1. In terms of biological role, component of the sulfite reductase complex that catalyzes the 6-electron reduction of sulfite to sulfide. This is one of several activities required for the biosynthesis of L-cysteine from sulfate. The sequence is that of Sulfite reductase [NADPH] hemoprotein beta-component from Musicola paradisiaca (strain Ech703) (Dickeya paradisiaca).